Reading from the N-terminus, the 179-residue chain is MFNKVIMVGRLTRNVELKYLPSGSAAATIGLATSRRFKKQDGTLGEEVCFIDARLFGRTAEIANQYLSKGSSVLIEGRLTYESWMDQTGKKNSRHTITADSLQFMDKKSDNPQANAMQDSIMHENSNNAYPANHNAPSQDPFNQAYAQNAYAKENLQAQPSKYQNSVPEINIDEEEIPF.

The region spanning 1-106 (MFNKVIMVGR…ITADSLQFMD (106 aa)) is the SSB domain. The span at 157–168 (QAQPSKYQNSVP) shows a compositional bias: polar residues. The disordered stretch occupies residues 157–179 (QAQPSKYQNSVPEINIDEEEIPF). Positions 174 to 179 (EEEIPF) match the Important for interaction with partner proteins motif.

Homotetramer.

Its function is as follows. Plays an important role in DNA replication, recombination and repair. Binds to ssDNA and to an array of partner proteins to recruit them to their sites of action during DNA metabolism. The protein is Single-stranded DNA-binding protein (ssb) of Helicobacter pylori (strain ATCC 700392 / 26695) (Campylobacter pylori).